Reading from the N-terminus, the 1126-residue chain is NUT family member 1 (1126 aa).

7 disordered regions span residues Met1–Ser56, Ile334–Glu367, Glu475–Ala515, Gln537–Ser559, Ala664–Gly692, Ala755–Leu810, and Gly932–Ser1014. The segment covering Phe30–Phe55 has biased composition (pro residues). The span at Ala338–Gln353 shows a compositional bias: basic residues. Over residues Lys962 to Arg975 the composition is skewed to polar residues. A Phosphoserine modification is found at Ser973. Basic and acidic residues predominate over residues Thr987–Glu1005. 3 positions are modified to phosphoserine: Ser1022, Ser1025, and Ser1027. The disordered stretch occupies residues Pro1032–Gln1126. Gln1042 bears the N5-methylglutamine mark. Residues Pro1106–Gln1126 are compositionally biased toward basic residues.

The protein belongs to the NUT family. Methylated at Gln-1042 by N6AMT1. Post-translationally, phosphorylation on Ser-1022, Ser-1025 or Ser-1027 is important for cytoplasmic export.

Its subcellular location is the cytoplasm. It localises to the nucleus. Its function is as follows. Plays a role in the regulation of proliferation. Regulates TERT expression by modulating SP1 binding to TERT promoter binding sites. This is NUT family member 1 from Mus musculus (Mouse).